A 390-amino-acid chain; its full sequence is MAVDLRPETWTVSSNEALNLSLVDENGAVNFKPTFTYPIYGDSEQIFGYKNLQIFLAFDSITFKPFVNVKYDAKLNNEIEDVQKLLLDKLPEDDVIIKDEEAWIKTFTKEQETFALPEKDKLVEEYEIGDQEFVIYRVSLQDPAIKMLHKRMQIFTLLFIESASYIDENDSSWEIFIVFNKNSKKCIGYTTTYQFWKYLGAQSFDSSKADEQKCRAKISQFLIMPPYQGHGHGKRLYQAIVKQWMNDLSVVEITVEDPNESFDDLRDRCDFERVINKNSLADCPNELPINIDWITKKQAQLKLEKRQFMRILEMFLLYQKSPNYRLQLKKRIYEKNFEALMDMDESLKKDKLQTAFQSLTEDYNRILSKVAIRKRTFSDSQGESDKRLKA.

Interaction with histone H4 N-terminus regions lie at residues 42–44 (DSE) and 193–195 (YQF). The region spanning 138–290 (VSLQDPAIKM…ADCPNELPIN (153 aa)) is the N-acetyltransferase domain. Acetyl-CoA is bound by residues 221 to 223 (FLI) and 228 to 234 (QGHGHGK). Glutamate 256 serves as the catalytic Proton donor/acceptor.

Belongs to the HAT1 family. Component of the HAT-B complex composed of at least HAT1 and HAT2. The HAT-B complex binds to histone H4 tail.

Its subcellular location is the cytoplasm. The protein resides in the nucleus. The enzyme catalyses L-lysyl-[protein] + acetyl-CoA = N(6)-acetyl-L-lysyl-[protein] + CoA + H(+). Its function is as follows. Catalytic component of the histone acetylase B (HAT-B) complex. Acetylates 'Lys-12' of histone H4 which is required for telomeric silencing. Has intrinsic substrate specificity that modifies lysine in recognition sequence GXGKXG. Involved in DNA double-strand break repair. The protein is Histone acetyltransferase type B catalytic subunit (HAT1) of Kluyveromyces lactis (strain ATCC 8585 / CBS 2359 / DSM 70799 / NBRC 1267 / NRRL Y-1140 / WM37) (Yeast).